The following is a 313-amino-acid chain: Ribosomal protein L11 methyltransferase (313 aa).

Residues Thr164, Gly185, Asp207, and Asn249 each contribute to the S-adenosyl-L-methionine site.

This sequence belongs to the methyltransferase superfamily. PrmA family.

The protein resides in the cytoplasm. The catalysed reaction is L-lysyl-[protein] + 3 S-adenosyl-L-methionine = N(6),N(6),N(6)-trimethyl-L-lysyl-[protein] + 3 S-adenosyl-L-homocysteine + 3 H(+). Its function is as follows. Methylates ribosomal protein L11. The protein is Ribosomal protein L11 methyltransferase of Clostridium perfringens (strain 13 / Type A).